Here is a 1254-residue protein sequence, read N- to C-terminus: MENKNNKVIKIELASADTIRSWSHGEVTKPETINYKTLKAEKDGLFDEKIFGPTKNYECFCGKFKKANPMNKGKKCEKCGVELTESIVRRERMGHIELAEPVTHIWMVKVSPSRIASLLDLKSKELEEVVYFVSHIVLDPGTSKHFAAKEVLDLGVSKSQKTRSKLRPAIEEIVTLINDPAHRDTLKAERLLEELNNPTIPFSIDEATALISKYTDAKFGIGASAIEELLKQIDLDKEIEITKNTLDAIGPNADNSKLLKRLDILESLKRSNQKPEWMVLRVLPVIPPDIRPIIQLDGGRFTTSEINDLYRRIIIRNERLLKVKEMGAPSIIINNEKRMLQEAVDALLDNERKPRPIQGKDKRPLKSLTSVLKGKQGRFRQNLLGKRVDYSGRSVIAIGPDLKMYQAGIPREMALTLFKPFVIQWLQEHEYAENVKVAEKMILQNDPKIWEALEHVIKDRPVLLNRAPTLHRLGIQAFEPKLVKGKAIRLHPLVTTAFNADFDGDQMAVHVPITKEAVAEARALMLGSNAILGPKDGKAIVTPGQDIILGNYYATFEEKGQLGEGTMFAEITEAINAFDTGIVSLNAVIGIAVDALPAEKFTEEQRKGYLLTTVGKILFNQIFDASFPWINSSSIYDAKEAVNSFIFDFSKDINEAIAEYTIVTPIKKKELSIIIEIYFNKFGARKTAEMLDKMKDLGFKYSTKSGTTISAGDVVAFKHKYEEFAEADQKVAEITSFYNEGMLTKEEKKHRVIEVWSDVKDDIQKRLELVLKQDTKNPVFVMADSGARGNVSNFTQLVGMRGLMNDTKGDIKEIPIKSSFREGLSVSEYFVSTHGARKGMADLALKTADSGYLTRRLVDVSQEIVVVNEDCKANKGFEIESVIDTKHNNVIVPLKDRIVGRYSFNDIKDIKGNVIVAKDTLIESKEADAIIAAGITKVTIRSVLTCDNQKGVCQRCYGRNLATASLVKIGEPVGVIAAQSIGEPGTQLTMRTFHTGGVAGDADITQGLPRIKELLDVTTQKGSVAIIAEKAGVVSDIINKNGINTIVVTEEVNGTQIEKQYKTMYNAVLRVNKGDQVKPGKKLTEGSINLHDLLEVAGTTAVQNYILKEVQKVYRLQGIEISDKYIEIIVKQMLNKVKVIQSGESHLLQGEIVTQQKFKEVVTQCIREGLVPPVAKNQILGIKKAPLKSESWLSSASFQDTARVLTDAIIKGREDKLEGLKENIMLGNLIPAGTGLTGIEEVMEIAEEYHKNEY.

C59, C61, C76, and C79 together coordinate Zn(2+). 3 residues coordinate Mg(2+): D501, D503, and D505. Positions 871, 946, 953, and 956 each coordinate Zn(2+).

Belongs to the RNA polymerase beta' chain family. As to quaternary structure, the RNAP catalytic core consists of 2 alpha, 1 beta, 1 beta' and 1 omega subunit. When a sigma factor is associated with the core the holoenzyme is formed, which can initiate transcription. Requires Mg(2+) as cofactor. The cofactor is Zn(2+).

The catalysed reaction is RNA(n) + a ribonucleoside 5'-triphosphate = RNA(n+1) + diphosphate. Functionally, DNA-dependent RNA polymerase catalyzes the transcription of DNA into RNA using the four ribonucleoside triphosphates as substrates. The sequence is that of DNA-directed RNA polymerase subunit beta' from Mesoplasma florum (strain ATCC 33453 / NBRC 100688 / NCTC 11704 / L1) (Acholeplasma florum).